The sequence spans 289 residues: Paired box protein 5 homolog (289 aa).

The paired DNA-binding region spans 29 to 155 (SHTGVNQLGG…SSINRIVRNK (127 aa)). Residues 32–88 (GVNQLGGVFVNGRPLADTVRAQIVEMSQHGTRPCDISRQLKVSHGCVSKILGRYYST) form a PAI subdomain region. Residues 107–155 (RVVECIAGYKRANPTMFAWEIRQKLIEDQICGEENVPSVSSINRIVRNK) form an RED subdomain region. 2 stretches are compositionally biased toward low complexity: residues 166–179 (SVTSSAARPSSATS) and 189–198 (VQQHMQQSTS). The interval 166–198 (SVTSSAARPSSATSHHQRSPPRGVQQHMQQSTS) is disordered.

It is found in the nucleus. The protein localises to the chromosome. In terms of biological role, transcription factor. Binds to specific DNA sequence motifs in regulatory elements, for example in the genes encoding transcription factor lin-48, apoptosis regulator ced-9 and neuropeptide-like protein nlp-2. Specifies cell fate, playing an essential role in embryonic and larval development. Involved in morphogenesis of the vulva and uterus in hermaphrodites and of the rectal epithelium of the tail in males. Plays multiple roles in the development of the egg-laying system, acting in both lin-3/EGF-pathway-dependent and -independent processes. Positively regulates expression of neuropeptide-like proteins nlp-2 and nlp-7 in uvl cells in an EGF-pathway-dependent manner. Involved in negatively modulating apoptosis in germline and somatic cells, acting in partial redundancy with transcription factor pax-2, probably by directly regulating transcription of ced-9. Positively regulates transcription of lin-48 in hindgut cells and functions in the development of the hindgut. The sequence is that of Paired box protein 5 homolog from Caenorhabditis elegans.